Consider the following 137-residue polypeptide: Profilin-3 (137 aa).

The protein belongs to the profilin family. As to quaternary structure, interacts with ACTRT3. As to expression, testis specific.

It localises to the cytoplasm. It is found in the cytoskeleton. The protein resides in the nucleus. Its function is as follows. Binds to actin and affects the structure of the cytoskeleton. Slightly reduces actin polymerization. Binds to poly-L-proline, phosphatidylinositol 3-phosphate (PtdIns(3)P), phosphatidylinositol 4,5-bisphosphate (PtdIns(4,5)P2) and phosphatidylinositol 4-phosphate (PtdIns(4)P). May be involved in spermatogenesis. The polypeptide is Profilin-3 (PFN3) (Homo sapiens (Human)).